The primary structure comprises 60 residues: Large ribosomal subunit protein uL30 (60 aa).

The protein belongs to the universal ribosomal protein uL30 family. In terms of assembly, part of the 50S ribosomal subunit.

The sequence is that of Large ribosomal subunit protein uL30 from Carboxydothermus hydrogenoformans (strain ATCC BAA-161 / DSM 6008 / Z-2901).